A 245-amino-acid chain; its full sequence is MSPYKAILRPNGFTFKQFFIAHDRCAMKVGTDGVLLGAWAPVTSVKRVLDIGSGSGLIALMLAQRTSEPVQIDAVELDEEAATQAQENVAASPWAHRVHVQQADVVEWAQRCEHSYSLIVSNPPYFSPGSQCASPERTTARYTTGLTHEMLLDCAEKLIDEDGFFCVILPASAGSKLLEQALQRGWHLRFRTDIADNDTRPANRVLLALSPQPGERLLDSMTIRGPDRQYSAAHCRLTRDFYLFR.

Belongs to the methyltransferase superfamily. tRNA (adenine-N(6)-)-methyltransferase family.

The protein localises to the cytoplasm. It carries out the reaction adenosine(37) in tRNA1(Val) + S-adenosyl-L-methionine = N(6)-methyladenosine(37) in tRNA1(Val) + S-adenosyl-L-homocysteine + H(+). Functionally, specifically methylates the adenine in position 37 of tRNA(1)(Val) (anticodon cmo5UAC). The polypeptide is tRNA1(Val) (adenine(37)-N6)-methyltransferase (Erwinia tasmaniensis (strain DSM 17950 / CFBP 7177 / CIP 109463 / NCPPB 4357 / Et1/99)).